The chain runs to 151 residues: Deoxyuridine 5'-triphosphate nucleotidohydrolase (151 aa).

Residues 70–72, asparagine 83, 87–89, and methionine 97 each bind substrate; these read RSG and LID.

This sequence belongs to the dUTPase family. It depends on Mg(2+) as a cofactor.

It catalyses the reaction dUTP + H2O = dUMP + diphosphate + H(+). Its pathway is pyrimidine metabolism; dUMP biosynthesis; dUMP from dCTP (dUTP route): step 2/2. Functionally, this enzyme is involved in nucleotide metabolism: it produces dUMP, the immediate precursor of thymidine nucleotides and it decreases the intracellular concentration of dUTP so that uracil cannot be incorporated into DNA. The polypeptide is Deoxyuridine 5'-triphosphate nucleotidohydrolase (Tolumonas auensis (strain DSM 9187 / NBRC 110442 / TA 4)).